A 435-amino-acid polypeptide reads, in one-letter code: Probable exopolygalacturonase X (435 aa).

An N-terminal signal peptide occupies residues Met1–Ala22. Residues Cys31–His55 are disordered. Basic and acidic residues predominate over residues Ser45 to His55. Residues Asn93, Asn112, Asn128, and Asn198 are each glycosylated (N-linked (GlcNAc...) asparagine). PbH1 repeat units follow at residues Ser199 to Arg229 and Ser230 to Pro251. Asp244 functions as the Proton donor in the catalytic mechanism. The cysteines at positions 246 and 263 are disulfide-linked. N-linked (GlcNAc...) asparagine glycosylation is found at Asn252 and Asn264. Residues Ser253–Ser273 form a PbH1 3 repeat. His267 is a catalytic residue. N-linked (GlcNAc...) asparagine glycans are attached at residues Asn291, Asn296, Asn328, and Asn353. A PbH1 4 repeat occupies Val326–Gln347. One copy of the PbH1 5 repeat lies at Pro361–Ser409. A disulfide bridge links Cys391 with Cys397. N-linked (GlcNAc...) asparagine glycans are attached at residues Asn406 and Asn429.

This sequence belongs to the glycosyl hydrolase 28 family.

The protein resides in the secreted. The catalysed reaction is [(1-&gt;4)-alpha-D-galacturonosyl](n) + H2O = alpha-D-galacturonate + [(1-&gt;4)-alpha-D-galacturonosyl](n-1). In terms of biological role, specific in hydrolyzing the terminal glycosidic bond of polygalacturonic acid and oligogalacturonates. This is Probable exopolygalacturonase X (pgaX) from Aspergillus niger (strain ATCC MYA-4892 / CBS 513.88 / FGSC A1513).